Consider the following 191-residue polypeptide: Large ribosomal subunit protein eL15 (191 aa).

This sequence belongs to the eukaryotic ribosomal protein eL15 family.

This Pyrobaculum aerophilum (strain ATCC 51768 / DSM 7523 / JCM 9630 / CIP 104966 / NBRC 100827 / IM2) protein is Large ribosomal subunit protein eL15 (rpl15e).